A 316-amino-acid chain; its full sequence is uncharacterized protein (316 aa).

The disordered stretch occupies residues methionine 1–proline 34. The segment covering asparagine 17 to glycine 26 has biased composition (basic and acidic residues).

This is an uncharacterized protein from Lepidoptera (butterflies and moths).